A 433-amino-acid chain; its full sequence is Serine hydroxymethyltransferase (433 aa).

121–123 (AHV) contacts (6S)-5,6,7,8-tetrahydrofolate. Lysine 227 carries the N6-(pyridoxal phosphate)lysine modification. Glutamate 243 contacts (6S)-5,6,7,8-tetrahydrofolate.

The protein belongs to the SHMT family. Homodimer. Pyridoxal 5'-phosphate is required as a cofactor.

It is found in the cytoplasm. The protein operates within amino-acid biosynthesis; glycine biosynthesis; glycine from L-serine: step 1/1. Catalyzes the reversible interconversion of serine and glycine with a modified folate serving as the one-carbon carrier. Also exhibits a pteridine-independent aldolase activity toward beta-hydroxyamino acids, producing glycine and aldehydes, via a retro-aldol mechanism. In Saccharolobus islandicus (strain Y.G.57.14 / Yellowstone #1) (Sulfolobus islandicus), this protein is Serine hydroxymethyltransferase.